We begin with the raw amino-acid sequence, 216 residues long: Elongation factor Ts (216 aa).

Residues 80 to 83 (TDFV) are involved in Mg(2+) ion dislocation from EF-Tu.

It belongs to the EF-Ts family.

Its subcellular location is the cytoplasm. In terms of biological role, associates with the EF-Tu.GDP complex and induces the exchange of GDP to GTP. It remains bound to the aminoacyl-tRNA.EF-Tu.GTP complex up to the GTP hydrolysis stage on the ribosome. The polypeptide is Elongation factor Ts (Alkaliphilus oremlandii (strain OhILAs) (Clostridium oremlandii (strain OhILAs))).